Reading from the N-terminus, the 351-residue chain is Phosphoribosylformylglycinamidine cyclo-ligase (351 aa).

It belongs to the AIR synthase family.

It localises to the cytoplasm. The catalysed reaction is 2-formamido-N(1)-(5-O-phospho-beta-D-ribosyl)acetamidine + ATP = 5-amino-1-(5-phospho-beta-D-ribosyl)imidazole + ADP + phosphate + H(+). It functions in the pathway purine metabolism; IMP biosynthesis via de novo pathway; 5-amino-1-(5-phospho-D-ribosyl)imidazole from N(2)-formyl-N(1)-(5-phospho-D-ribosyl)glycinamide: step 2/2. This Burkholderia ambifaria (strain MC40-6) protein is Phosphoribosylformylglycinamidine cyclo-ligase.